The following is a 1342-amino-acid chain: DNA-directed RNA polymerase subunit beta (1342 aa).

It belongs to the RNA polymerase beta chain family. As to quaternary structure, the RNAP catalytic core consists of 2 alpha, 1 beta, 1 beta' and 1 omega subunit. When a sigma factor is associated with the core the holoenzyme is formed, which can initiate transcription.

It carries out the reaction RNA(n) + a ribonucleoside 5'-triphosphate = RNA(n+1) + diphosphate. In terms of biological role, DNA-dependent RNA polymerase catalyzes the transcription of DNA into RNA using the four ribonucleoside triphosphates as substrates. The sequence is that of DNA-directed RNA polymerase subunit beta from Colwellia psychrerythraea (strain 34H / ATCC BAA-681) (Vibrio psychroerythus).